The primary structure comprises 166 residues: SsrA-binding protein (166 aa).

The disordered stretch occupies residues His-143–Arg-166. Residues Asp-144 to Lys-159 show a composition bias toward basic and acidic residues.

It belongs to the SmpB family.

Its subcellular location is the cytoplasm. Functionally, required for rescue of stalled ribosomes mediated by trans-translation. Binds to transfer-messenger RNA (tmRNA), required for stable association of tmRNA with ribosomes. tmRNA and SmpB together mimic tRNA shape, replacing the anticodon stem-loop with SmpB. tmRNA is encoded by the ssrA gene; the 2 termini fold to resemble tRNA(Ala) and it encodes a 'tag peptide', a short internal open reading frame. During trans-translation Ala-aminoacylated tmRNA acts like a tRNA, entering the A-site of stalled ribosomes, displacing the stalled mRNA. The ribosome then switches to translate the ORF on the tmRNA; the nascent peptide is terminated with the 'tag peptide' encoded by the tmRNA and targeted for degradation. The ribosome is freed to recommence translation, which seems to be the essential function of trans-translation. This is SsrA-binding protein from Prochlorococcus marinus (strain MIT 9211).